The primary structure comprises 248 residues: Triosephosphate isomerase (248 aa).

Position 11–13 (11–13 (NWK)) interacts with substrate. The active-site Electrophile is histidine 95. Glutamate 167 functions as the Proton acceptor in the catalytic mechanism. Residues glycine 173, serine 212, and 233-234 (GG) each bind substrate.

This sequence belongs to the triosephosphate isomerase family. As to quaternary structure, homodimer.

It localises to the cytoplasm. The catalysed reaction is D-glyceraldehyde 3-phosphate = dihydroxyacetone phosphate. It functions in the pathway carbohydrate biosynthesis; gluconeogenesis. Its pathway is carbohydrate degradation; glycolysis; D-glyceraldehyde 3-phosphate from glycerone phosphate: step 1/1. Functionally, involved in the gluconeogenesis. Catalyzes stereospecifically the conversion of dihydroxyacetone phosphate (DHAP) to D-glyceraldehyde-3-phosphate (G3P). The sequence is that of Triosephosphate isomerase from Ralstonia nicotianae (strain ATCC BAA-1114 / GMI1000) (Ralstonia solanacearum).